The chain runs to 124 residues: Small ribosomal subunit protein uS12 (124 aa).

3-methylthioaspartic acid is present on aspartate 89.

This sequence belongs to the universal ribosomal protein uS12 family. As to quaternary structure, part of the 30S ribosomal subunit. Contacts proteins S8 and S17. May interact with IF1 in the 30S initiation complex.

With S4 and S5 plays an important role in translational accuracy. In terms of biological role, interacts with and stabilizes bases of the 16S rRNA that are involved in tRNA selection in the A site and with the mRNA backbone. Located at the interface of the 30S and 50S subunits, it traverses the body of the 30S subunit contacting proteins on the other side and probably holding the rRNA structure together. The combined cluster of proteins S8, S12 and S17 appears to hold together the shoulder and platform of the 30S subunit. The chain is Small ribosomal subunit protein uS12 from Nitratiruptor sp. (strain SB155-2).